Here is a 549-residue protein sequence, read N- to C-terminus: Hydroxylamine reductase (549 aa).

[4Fe-4S] cluster contacts are provided by cysteine 5, cysteine 8, cysteine 17, and cysteine 23. The hybrid [4Fe-2O-2S] cluster site is built by histidine 243, glutamate 267, cysteine 311, cysteine 403, cysteine 431, cysteine 456, glutamate 491, and lysine 493. Cysteine 403 bears the Cysteine persulfide mark.

This sequence belongs to the HCP family. Requires [4Fe-4S] cluster as cofactor. It depends on hybrid [4Fe-2O-2S] cluster as a cofactor.

It is found in the cytoplasm. The catalysed reaction is A + NH4(+) + H2O = hydroxylamine + AH2 + H(+). Its function is as follows. Catalyzes the reduction of hydroxylamine to form NH(3) and H(2)O. The chain is Hydroxylamine reductase from Desulfitobacterium hafniense (strain DSM 10664 / DCB-2).